The following is a 129-amino-acid chain: Transcriptional regulator WhiB2 (129 aa).

The disordered stretch occupies residues S23 to L45. The 58-residue stretch at L66–R123 folds into the 4Fe-4S Wbl-type domain. Residues C67, C90, C93, and C99 each contribute to the [4Fe-4S] cluster site.

The protein belongs to the WhiB family. It depends on [4Fe-4S] cluster as a cofactor. The Fe-S cluster can be nitrosylated by nitric oxide (NO). Post-translationally, upon Fe-S cluster removal intramolecular disulfide bonds are formed.

Its subcellular location is the cytoplasm. Its function is as follows. Acts as a transcriptional regulator. Probably redox-responsive. The apo- but not holo-form probably binds DNA. The sequence is that of Transcriptional regulator WhiB2 (whiB2) from Mycolicibacterium smegmatis (strain ATCC 700084 / mc(2)155) (Mycobacterium smegmatis).